The chain runs to 237 residues: Ribonuclease PH (237 aa).

Phosphate is bound by residues R86 and 124 to 126 (GTR).

Belongs to the RNase PH family. Homohexameric ring arranged as a trimer of dimers.

It catalyses the reaction tRNA(n+1) + phosphate = tRNA(n) + a ribonucleoside 5'-diphosphate. Functionally, phosphorolytic 3'-5' exoribonuclease that plays an important role in tRNA 3'-end maturation. Removes nucleotide residues following the 3'-CCA terminus of tRNAs; can also add nucleotides to the ends of RNA molecules by using nucleoside diphosphates as substrates, but this may not be physiologically important. Probably plays a role in initiation of 16S rRNA degradation (leading to ribosome degradation) during starvation. This is Ribonuclease PH from Shewanella woodyi (strain ATCC 51908 / MS32).